A 167-amino-acid chain; its full sequence is Crossover junction endodeoxyribonuclease RuvC (167 aa).

Residues Asp7, Glu67, and Asp139 contribute to the active site. Mg(2+)-binding residues include Asp7, Glu67, and Asp139.

This sequence belongs to the RuvC family. In terms of assembly, homodimer which binds Holliday junction (HJ) DNA. The HJ becomes 2-fold symmetrical on binding to RuvC with unstacked arms; it has a different conformation from HJ DNA in complex with RuvA. In the full resolvosome a probable DNA-RuvA(4)-RuvB(12)-RuvC(2) complex forms which resolves the HJ. Mg(2+) is required as a cofactor.

The protein resides in the cytoplasm. The enzyme catalyses Endonucleolytic cleavage at a junction such as a reciprocal single-stranded crossover between two homologous DNA duplexes (Holliday junction).. In terms of biological role, the RuvA-RuvB-RuvC complex processes Holliday junction (HJ) DNA during genetic recombination and DNA repair. Endonuclease that resolves HJ intermediates. Cleaves cruciform DNA by making single-stranded nicks across the HJ at symmetrical positions within the homologous arms, yielding a 5'-phosphate and a 3'-hydroxyl group; requires a central core of homology in the junction. The consensus cleavage sequence is 5'-(A/T)TT(C/G)-3'. Cleavage occurs on the 3'-side of the TT dinucleotide at the point of strand exchange. HJ branch migration catalyzed by RuvA-RuvB allows RuvC to scan DNA until it finds its consensus sequence, where it cleaves and resolves the cruciform DNA. This chain is Crossover junction endodeoxyribonuclease RuvC, found in Zymomonas mobilis subsp. mobilis (strain ATCC 31821 / ZM4 / CP4).